Consider the following 215-residue polypeptide: Glutaredoxin 2 (215 aa).

The 77-residue stretch at 1–77 (MKLYIYDHCP…YVDKLDGKPL (77 aa)) folds into the GST N-terminal domain. A disulfide bond links cysteine 9 and cysteine 12.

This sequence belongs to the glutaredoxin family.

In terms of biological role, involved in reducing some disulfides in a coupled system with glutathione reductase. Does not act as hydrogen donor for ribonucleotide reductase. The chain is Glutaredoxin 2 (grxB) from Escherichia coli O157:H7.